A 196-amino-acid polypeptide reads, in one-letter code: SPRY domain-containing protein 7 (196 aa).

Position 2 is an N-acetylalanine (A2). Residues 2 to 184 enclose the B30.2/SPRY domain; it reads AASVFCCLRC…FSEFYHTPPP (183 aa).

The sequence is that of SPRY domain-containing protein 7 (SPRYD7) from Bos taurus (Bovine).